The sequence spans 115 residues: Transcriptional regulator protein FixT (115 aa).

Interacts directly with FixL.

Its function is as follows. Prevents transcription of the intermediate key regulatory genes nifA and fixK by counteracting the activity of the FixLJ two-component system. Acts as an inhibitor of the sensor hemoprotein kinase fixL, preventing the production or the accumulation of its phosphorylated form. In Rhizobium meliloti (strain 1021) (Ensifer meliloti), this protein is Transcriptional regulator protein FixT (fixT).